The sequence spans 247 residues: Adenosylcobinamide-GDP ribazoletransferase (247 aa).

The next 5 membrane-spanning stretches (helical) occupy residues 34-54 (IITF…VFMV), 59-79 (CGAP…TGGF), 113-133 (GGLA…ELAL), 138-158 (ILAS…LLMY), and 194-214 (VLLP…AIFI).

This sequence belongs to the CobS family. Mg(2+) serves as cofactor.

The protein localises to the cell inner membrane. The enzyme catalyses alpha-ribazole + adenosylcob(III)inamide-GDP = adenosylcob(III)alamin + GMP + H(+). It carries out the reaction alpha-ribazole 5'-phosphate + adenosylcob(III)inamide-GDP = adenosylcob(III)alamin 5'-phosphate + GMP + H(+). It participates in cofactor biosynthesis; adenosylcobalamin biosynthesis; adenosylcobalamin from cob(II)yrinate a,c-diamide: step 7/7. Functionally, joins adenosylcobinamide-GDP and alpha-ribazole to generate adenosylcobalamin (Ado-cobalamin). Also synthesizes adenosylcobalamin 5'-phosphate from adenosylcobinamide-GDP and alpha-ribazole 5'-phosphate. The sequence is that of Adenosylcobinamide-GDP ribazoletransferase from Escherichia coli O81 (strain ED1a).